Consider the following 329-residue polypeptide: GTP 3',8-cyclase (329 aa).

A Radical SAM core domain is found at 8–234 (AFARKFYYLR…QLRQRSDGPA (227 aa)). R17 lines the GTP pocket. 2 residues coordinate [4Fe-4S] cluster: C24 and C28. S-adenosyl-L-methionine is bound at residue Y30. C31 contacts [4Fe-4S] cluster. GTP is bound at residue R68. S-adenosyl-L-methionine is bound at residue G72. Residue T99 coordinates GTP. An S-adenosyl-L-methionine-binding site is contributed by S123. K160 lines the GTP pocket. Position 194 (M194) interacts with S-adenosyl-L-methionine. C257 and C260 together coordinate [4Fe-4S] cluster. A GTP-binding site is contributed by 262–264 (RLR). C274 lines the [4Fe-4S] cluster pocket.

Belongs to the radical SAM superfamily. MoaA family. In terms of assembly, monomer and homodimer. [4Fe-4S] cluster is required as a cofactor.

The catalysed reaction is GTP + AH2 + S-adenosyl-L-methionine = (8S)-3',8-cyclo-7,8-dihydroguanosine 5'-triphosphate + 5'-deoxyadenosine + L-methionine + A + H(+). It participates in cofactor biosynthesis; molybdopterin biosynthesis. Functionally, catalyzes the cyclization of GTP to (8S)-3',8-cyclo-7,8-dihydroguanosine 5'-triphosphate. The protein is GTP 3',8-cyclase of Salmonella paratyphi B (strain ATCC BAA-1250 / SPB7).